A 383-amino-acid polypeptide reads, in one-letter code: BRISC and BRCA1-A complex member 2 (383 aa).

UEV-like stretches follow at residues 30–147 (DATN…TLLE) and 275–364 (IAAF…RAKA).

The protein belongs to the BABAM2 family. Component of the ARISC complex, at least composed of UIMC1/RAP80, ABRAXAS1, BRCC3/BRCC36, BABAM2 and BABAM1/NBA1. Component of the BRCA1-A complex, at least composed of BRCA1, BARD1, UIMC1/RAP80, ABRAXAS1, BRCC3/BRCC36, BABAM2 and BABAM1/NBA1. In the BRCA1-A complex, interacts directly with ABRAXAS1, BRCC3/BRCC36 and BABAM1/NBA1. Binds polyubiquitin. Component of the BRISC complex, at least composed of ABRAXAS2, BRCC3/BRCC36, BABAM2 and BABAM1/NBA1. Identified in a complex with SHMT2 and the other subunits of the BRISC complex. Component of the BRCA1/BRCA2 containing complex (BRCC), which also contains BRCA1, BRCA2, BARD1, BRCC3/BRCC36 and RAD51. BRCC is a ubiquitin E3 ligase complex that enhances cellular survival following DNA damage. May interact with FAS and TNFRSF1A.

The protein localises to the cytoplasm. It localises to the nucleus. Component of the BRCA1-A complex, a complex that specifically recognizes 'Lys-63'-linked ubiquitinated histones H2A and H2AX at DNA lesions sites, leading to target the BRCA1-BARD1 heterodimer to sites of DNA damage at double-strand breaks (DSBs). The BRCA1-A complex also possesses deubiquitinase activity that specifically removes 'Lys-63'-linked ubiquitin on histones H2A and H2AX. In the BRCA1-A complex, it acts as an adapter that bridges the interaction between BABAM1/NBA1 and the rest of the complex, thereby being required for the complex integrity and modulating the E3 ubiquitin ligase activity of the BRCA1-BARD1 heterodimer. Component of the BRISC complex, a multiprotein complex that specifically cleaves 'Lys-63'-linked ubiquitin in various substrates. Within the BRISC complex, acts as an adapter that bridges the interaction between BABAM1/NBA1 and the rest of the complex, thereby being required for the complex integrity. The BRISC complex is required for normal mitotic spindle assembly and microtubule attachment to kinetochores via its role in deubiquitinating NUMA1. The BRISC complex plays a role in interferon signaling via its role in the deubiquitination of the interferon receptor IFNAR1; deubiquitination increases IFNAR1 activity by enhancing its stability and cell surface expression. Down-regulates the response to bacterial lipopolysaccharide (LPS) via its role in IFNAR1 deubiquitination. May play a role in homeostasis or cellular differentiation in cells of neural, epithelial and germline origins. May also act as a death receptor-associated anti-apoptotic protein, which inhibits the mitochondrial apoptotic pathway. May regulate TNF-alpha signaling through its interactions with TNFRSF1A; however these effects may be indirect. In Gallus gallus (Chicken), this protein is BRISC and BRCA1-A complex member 2 (BABAM2).